A 470-amino-acid chain; its full sequence is Low molecular weight neuronal intermediate filament (470 aa).

The interval 1–91 (MTSRELYTSS…KIVRTNEKEQ (91 aa)) is head. The IF rod domain occupies 88 to 399 (EKEQLQGLND…KLLEGEETRL (312 aa)). The interval 91 to 123 (QLQGLNDRFVTYIEKVHHLEQQNKLLESEVTLL) is coil 1A. The tract at residues 121–136 (TLLRQKHSEPSRLSHI) is linker 1. The interval 137–232 (YEQEIRELRS…KVHEEEIAEL (96 aa)) is coil 1B. Residues 233–251 (QASVQEAQISVEMDVVSKP) are linker 12. Residues 252–270 (DLTAALKEIRMQYEVLSAR) are coil 2A. Residues 271–279 (NQQSSEEWY) are linker 2. Positions 280-395 (QAKIANVSLE…AAYRKLLEGE (116 aa)) are coil 2B. A tail region spans residues 396–470 (ETRLTSVGGG…EKISQKAAAN (75 aa)). Residues 414 to 431 (FSSGSYSGGRSSTTSTIS) show a composition bias toward low complexity. The disordered stretch occupies residues 414–470 (FSSGSYSGGRSSTTSTISIRKEEKKESPEGGKGGSSGQPKTSKPGDQEKISQKAAAN). The segment covering 432 to 442 (IRKEEKKESPE) has biased composition (basic and acidic residues).

This sequence belongs to the intermediate filament family. In terms of tissue distribution, nervous system; in axons in the PNS and in small perikarya in the dorsal root ganglion.

This is Low molecular weight neuronal intermediate filament from Xenopus laevis (African clawed frog).